A 111-amino-acid polypeptide reads, in one-letter code: Secreted RxLR effector protein 81 (111 aa).

Positions 1 to 16 (MLVSMLLIIFPNGVSL) are cleaved as a signal peptide. Residue N52 is glycosylated (N-linked (GlcNAc...) asparagine). The segment at 73 to 92 (KKFSSSDEDKSRDVRRRLRP) is disordered. A RxLR-dEER motif is present at residues 88 to 91 (RRLR).

Belongs to the RxLR effector family.

Its subcellular location is the secreted. It is found in the host nucleus. The protein resides in the host cytoplasm. Functionally, secreted effector that partially suppresses the host cell death induced by cell death-inducing proteins. The chain is Secreted RxLR effector protein 81 from Plasmopara viticola (Downy mildew of grapevine).